The sequence spans 96 residues: Large ribosomal subunit protein uL23 (96 aa).

The protein belongs to the universal ribosomal protein uL23 family. As to quaternary structure, part of the 50S ribosomal subunit. Contacts protein L29, and trigger factor when it is bound to the ribosome.

Functionally, one of the early assembly proteins it binds 23S rRNA. One of the proteins that surrounds the polypeptide exit tunnel on the outside of the ribosome. Forms the main docking site for trigger factor binding to the ribosome. The sequence is that of Large ribosomal subunit protein uL23 from Syntrophus aciditrophicus (strain SB).